Consider the following 356-residue polypeptide: UDP-N-acetylglucosamine--N-acetylmuramyl-(pentapeptide) pyrophosphoryl-undecaprenol N-acetylglucosamine transferase (356 aa).

UDP-N-acetyl-alpha-D-glucosamine-binding positions include 12 to 14 (TGG), asparagine 124, arginine 163, serine 188, isoleucine 242, 261 to 266 (ALTVSE), and glutamine 287.

The protein belongs to the glycosyltransferase 28 family. MurG subfamily.

It is found in the cell inner membrane. The catalysed reaction is di-trans,octa-cis-undecaprenyl diphospho-N-acetyl-alpha-D-muramoyl-L-alanyl-D-glutamyl-meso-2,6-diaminopimeloyl-D-alanyl-D-alanine + UDP-N-acetyl-alpha-D-glucosamine = di-trans,octa-cis-undecaprenyl diphospho-[N-acetyl-alpha-D-glucosaminyl-(1-&gt;4)]-N-acetyl-alpha-D-muramoyl-L-alanyl-D-glutamyl-meso-2,6-diaminopimeloyl-D-alanyl-D-alanine + UDP + H(+). Its pathway is cell wall biogenesis; peptidoglycan biosynthesis. In terms of biological role, cell wall formation. Catalyzes the transfer of a GlcNAc subunit on undecaprenyl-pyrophosphoryl-MurNAc-pentapeptide (lipid intermediate I) to form undecaprenyl-pyrophosphoryl-MurNAc-(pentapeptide)GlcNAc (lipid intermediate II). The protein is UDP-N-acetylglucosamine--N-acetylmuramyl-(pentapeptide) pyrophosphoryl-undecaprenol N-acetylglucosamine transferase of Pseudomonas fluorescens (strain SBW25).